A 671-amino-acid polypeptide reads, in one-letter code: Leucine aminopeptidase 2 (671 aa).

Substrate is bound by residues glutamine 184–glutamate 186 and proline 311–glutamate 316. A Zn(2+)-binding site is contributed by histidine 340. The Proton acceptor role is filled by glutamate 341. 2 residues coordinate Zn(2+): histidine 344 and glutamate 363. Tyrosine 429 serves as the catalytic Proton donor.

It belongs to the peptidase M1 family. Zn(2+) serves as cofactor.

The protein resides in the cytoplasm. The protein localises to the nucleus. It carries out the reaction an epoxide + H2O = an ethanediol. With respect to regulation, inhibited by 3-(4-benzyloxyphenyl)-2-(R)-amino-1-propanethiol (thioamine) and N-hydroxy-N-(2-(S)-amino-3-(4-benzyloxyphenyl)propyl)-5-carboxypen-tanamide (hydroxamic acid). The aminopeptidase activity is stimulated by LTA(4). Its function is as follows. Aminopeptidase that preferentially cleaves di- and tripeptides. Also has low epoxide hydrolase activity (in vitro). Can hydrolyze the epoxide leukotriene LTA(4) but it forms preferentially 5,6-dihydroxy-7,9,11,14-eicosatetraenoic acid rather than the cytokine leukotriene B(4) as the product compared to the homologous mammalian enzyme (in vitro). This Saccharomyces cerevisiae (strain YJM789) (Baker's yeast) protein is Leucine aminopeptidase 2.